The following is a 434-amino-acid chain: Enolase (434 aa).

Q163 is a (2R)-2-phosphoglycerate binding site. E205 acts as the Proton donor in catalysis. Mg(2+) is bound by residues D242, E289, and D316. 4 residues coordinate (2R)-2-phosphoglycerate: K341, R370, S371, and K392. Catalysis depends on K341, which acts as the Proton acceptor.

The protein belongs to the enolase family. The cofactor is Mg(2+).

It is found in the cytoplasm. It localises to the secreted. Its subcellular location is the cell surface. It carries out the reaction (2R)-2-phosphoglycerate = phosphoenolpyruvate + H2O. Its pathway is carbohydrate degradation; glycolysis; pyruvate from D-glyceraldehyde 3-phosphate: step 4/5. Catalyzes the reversible conversion of 2-phosphoglycerate (2-PG) into phosphoenolpyruvate (PEP). It is essential for the degradation of carbohydrates via glycolysis. The chain is Enolase from Lacticaseibacillus paracasei (strain ATCC 334 / BCRC 17002 / CCUG 31169 / CIP 107868 / KCTC 3260 / NRRL B-441) (Lactobacillus paracasei).